We begin with the raw amino-acid sequence, 419 residues long: G protein-activated inward rectifier potassium channel 4 (419 aa).

The Cytoplasmic portion of the chain corresponds to 1–86 (MAGDSRNAMN…LFTTLVDLKW (86 aa)). At Ser-5 the chain carries Phosphoserine. A helical transmembrane segment spans residues 87-111 (RFNLLVFTMVYTITWLFFGFIWWLI). Topologically, residues 112 to 135 (AYVRGDLDHVGDQEWIPCVENLSG) are extracellular. Positions 136–147 (FVSAFLFSIETE) form an intramembrane region, helical; Pore-forming. Residues 148–154 (TTIGYGF) constitute an intramembrane region (pore-forming). The short motif at 149–154 (TIGYGF) is the Selectivity filter element. Over 155–163 (RVITEKCPE) the chain is Extracellular. The chain crosses the membrane as a helical span at residues 164-185 (GIILLLVQAILGSIVNAFMVGC). Over 186-419 (MFVKISQPKK…SVSQATRGSM (234 aa)) the chain is Cytoplasmic. The disordered stretch occupies residues 388-419 (GCAEAGNEAEAEKDEEGEPNGLSVSQATRGSM). The span at 394-405 (NEAEAEKDEEGE) shows a compositional bias: acidic residues. Positions 409–419 (LSVSQATRGSM) are enriched in polar residues.

This sequence belongs to the inward rectifier-type potassium channel (TC 1.A.2.1) family. KCNJ5 subfamily. In terms of assembly, associates with KCNJ3/GIRK1 to form a G-protein-activated heteromultimer pore-forming unit. Associates with KCNJ6/GRIK2 to form a G-protein-activated heteromultimer pore-forming unit. As to expression, expressed in the heart.

It is found in the membrane. It carries out the reaction K(+)(in) = K(+)(out). With respect to regulation, heteromultimer composed of KCNJ3/GIRK1 and KCNJ5/GIRK4 is activated by phosphatidylinositol 4,5 biphosphate (PtdIns(4,5)P2). Its function is as follows. Inward rectifier potassium channels are characterized by a greater tendency to allow potassium to flow into the cell rather than out of it. Their voltage dependence is regulated by the concentration of extracellular potassium; as external potassium is raised, the voltage range of the channel opening shifts to more positive voltages. The inward rectification is mainly due to the blockage of outward current by internal magnesium. Can be blocked by external barium. This potassium channel is controlled by G proteins. Forms a functional channel in association with KCNJ3/GIRK1. The sequence is that of G protein-activated inward rectifier potassium channel 4 (Kcnj5) from Mus musculus (Mouse).